Consider the following 699-residue polypeptide: Elongation factor G 1 (699 aa).

The 283-residue stretch at 8 to 290 (EHYRNIGICA…AVIEFLPSPS (283 aa)) folds into the tr-type G domain. GTP-binding positions include 17–24 (AHVDAGKT), 88–92 (DTPGH), and 142–145 (NKMD).

Belongs to the TRAFAC class translation factor GTPase superfamily. Classic translation factor GTPase family. EF-G/EF-2 subfamily.

The protein resides in the cytoplasm. Its function is as follows. Catalyzes the GTP-dependent ribosomal translocation step during translation elongation. During this step, the ribosome changes from the pre-translocational (PRE) to the post-translocational (POST) state as the newly formed A-site-bound peptidyl-tRNA and P-site-bound deacylated tRNA move to the P and E sites, respectively. Catalyzes the coordinated movement of the two tRNA molecules, the mRNA and conformational changes in the ribosome. The polypeptide is Elongation factor G 1 (Vibrio parahaemolyticus serotype O3:K6 (strain RIMD 2210633)).